Reading from the N-terminus, the 399-residue chain is Tryptophan synthase beta chain (399 aa).

An N6-(pyridoxal phosphate)lysine modification is found at lysine 92.

It belongs to the TrpB family. Tetramer of two alpha and two beta chains. It depends on pyridoxal 5'-phosphate as a cofactor.

The enzyme catalyses (1S,2R)-1-C-(indol-3-yl)glycerol 3-phosphate + L-serine = D-glyceraldehyde 3-phosphate + L-tryptophan + H2O. Its pathway is amino-acid biosynthesis; L-tryptophan biosynthesis; L-tryptophan from chorismate: step 5/5. Functionally, the beta subunit is responsible for the synthesis of L-tryptophan from indole and L-serine. This Bordetella bronchiseptica (strain ATCC BAA-588 / NCTC 13252 / RB50) (Alcaligenes bronchisepticus) protein is Tryptophan synthase beta chain.